We begin with the raw amino-acid sequence, 357 residues long: Sulfate/thiosulfate import ATP-binding protein CysA (357 aa).

Positions 3–237 constitute an ABC transporter domain; the sequence is ITIQNLNKHF…PENAFVTEFL (235 aa). 35-42 contributes to the ATP binding site; that stretch reads GPSGCGKT.

The protein belongs to the ABC transporter superfamily. Sulfate/tungstate importer (TC 3.A.1.6) family. As to quaternary structure, the complex is composed of two ATP-binding proteins (CysA), two transmembrane proteins (CysT and CysW) and a solute-binding protein (CysP).

It localises to the cell inner membrane. The catalysed reaction is sulfate(out) + ATP + H2O = sulfate(in) + ADP + phosphate + H(+). It catalyses the reaction thiosulfate(out) + ATP + H2O = thiosulfate(in) + ADP + phosphate + H(+). In terms of biological role, part of the ABC transporter complex CysAWTP involved in sulfate/thiosulfate import. Responsible for energy coupling to the transport system. This Neisseria meningitidis serogroup A / serotype 4A (strain DSM 15465 / Z2491) protein is Sulfate/thiosulfate import ATP-binding protein CysA.